Consider the following 318-residue polypeptide: Melanocyte-stimulating hormone receptor (318 aa).

At 1–37 (MPMQGAQRKLLGSLNSTPTATSNLGLAANRTGAPCLE) the chain is on the extracellular side. The N-linked (GlcNAc...) asparagine glycan is linked to Asn-29. The chain crosses the membrane as a helical span at residues 38–63 (LPIPNGLFLSLGLVSLVENVLVVAAI). Topologically, residues 64–72 (AKNRNLHSS) are cytoplasmic. A helical transmembrane segment spans residues 73–93 (MYCFICCLALSDLLVSGSNML). Residues 94–118 (ETAVILLLEAGVLATRASVVQQLHN) lie on the Extracellular side of the membrane. The chain crosses the membrane as a helical span at residues 119–140 (TIDVLTCSSMLCSLCFLGAIAV). At 141-163 (DRYISIFYALRYHSIMTLPRAQR) the chain is on the cytoplasmic side. Residues 164–183 (AVAAIWVASVLSSTLFITYY) traverse the membrane as a helical segment. Residues 184–191 (DHAAVLLC) are Extracellular-facing. A helical membrane pass occupies residues 192–211 (LMVFFLAMLVLMAVLYVHML). Residues 212–240 (ARARQHAQGIIRLHKRQPPAHKGFGLRGA) are Cytoplasmic-facing. The chain crosses the membrane as a helical span at residues 241 to 266 (ATLTILLGIFFLCWGPFFLCLTLVVF). The Extracellular segment spans residues 267-279 (CPQHLTCNCIFKN). The chain crosses the membrane as a helical span at residues 280 to 300 (FKVFLTLIICNTIIDPLIYAF). Topologically, residues 301–317 (RSQELRRMLKEVLGRGR) are cytoplasmic.

It belongs to the G-protein coupled receptor 1 family. Interacts with MGRN1, but does not undergo MGRN1-mediated ubiquitination; this interaction competes with GNAS-binding and thus inhibits agonist-induced cAMP production. Interacts with OPN3; the interaction results in a decrease in MC1R-mediated cAMP signaling and ultimately a decrease in melanin production in melanocytes.

The protein resides in the cell membrane. Receptor for MSH (alpha, beta and gamma) and ACTH. The activity of this receptor is mediated by G proteins which activate adenylate cyclase. Mediates melanogenesis, the production of eumelanin (black/brown) and phaeomelanin (red/yellow), via regulation of cAMP signaling in melanocytes. In Leontopithecus rosalia (Golden lion tamarin), this protein is Melanocyte-stimulating hormone receptor (MC1R).